Consider the following 259-residue polypeptide: Small ribosomal subunit protein uS2 (259 aa).

The disordered stretch occupies residues Lys232–Lys259.

Belongs to the universal ribosomal protein uS2 family.

This is Small ribosomal subunit protein uS2 from Maridesulfovibrio salexigens (strain ATCC 14822 / DSM 2638 / NCIMB 8403 / VKM B-1763) (Desulfovibrio salexigens).